The chain runs to 562 residues: Alpha-1D adrenergic receptor (562 aa).

Residues 1–90 lie on the Extracellular side of the membrane; that stretch reads MTFRDILSVT…VGGLVVSAQG (90 aa). Disordered regions lie at residues 13 to 44 and 50 to 69; these read GPRA…GVPG and AVVG…EAGA. Over residues 21–44 the composition is skewed to gly residues; sequence GGSGAGGGAGTVGPEGPAVGGVPG. 2 N-linked (GlcNAc...) asparagine glycosylation sites follow: asparagine 60 and asparagine 76. A helical transmembrane segment spans residues 91 to 115; that stretch reads VGVGVFLAAFILTAVAGNLLVILSV. At 116–127 the chain is on the cytoplasmic side; the sequence is ACNRHLQTVTNY. The helical transmembrane segment at 128–153 threads the bilayer; the sequence is FIVNLAVADLLLSAAVLPFSATMEVL. The Extracellular portion of the chain corresponds to 154–163; that stretch reads GFWPFGRTFC. Residues 164-186 traverse the membrane as a helical segment; the sequence is DVWAAVDVLCCTASILSLCTISV. Over 187-207 the chain is Cytoplasmic; the sequence is DRYVGVRHSLKYPAIMTERKA. The chain crosses the membrane as a helical span at residues 208-232; that stretch reads AAILALLWAVALVVSVGPLLGWKEP. Topologically, residues 233–245 are extracellular; that stretch reads VPPDERFCGITEE. Residues 246–269 form a helical membrane-spanning segment; sequence VGYAIFSSVCSFYLPMAVIVVMYC. Residues 270 to 342 lie on the Cytoplasmic side of the membrane; it reads RVYVVARSTT…KFSREKKAAK (73 aa). The helical transmembrane segment at 343-367 threads the bilayer; that stretch reads TLAIVVGVFVLCWFPFFFVLPLGSL. The Extracellular portion of the chain corresponds to 368-374; the sequence is FPQLKPS. Residues 375 to 399 form a helical membrane-spanning segment; sequence EGVFKVIFWLGYFNSCVNPLIYPCS. Over 400–562 the chain is Cytoplasmic; sequence SREFKRAFLR…DLSNLRETDI (163 aa). Cysteine 413 is lipidated: S-palmitoyl cysteine. The tract at residues 444 to 472 is disordered; it reads QPAHRTPRGSPSPHCTPRPGLRRHAGGAG.

This sequence belongs to the G-protein coupled receptor 1 family. Adrenergic receptor subfamily. ADRA1D sub-subfamily. As to quaternary structure, interacts with FLNA (via filamin repeat 21); increases PKA-mediated phosphorylation of FLNA. Post-translationally, palmitoylated. Palmitoylation by ZDHHC21 may increase the expression of the receptor and regulate downstream signaling.

It localises to the cell membrane. This alpha-adrenergic receptor mediates its effect through the influx of extracellular calcium. In Mus musculus (Mouse), this protein is Alpha-1D adrenergic receptor (Adra1d).